Reading from the N-terminus, the 132-residue chain is MVKIRLTRLGRHKLPFFRIVVIDSRARRDGAYIEKVGTYEPFEGVVNINEEIALSWLKKGAQPSDTVKNLLREQGVWKKFMDSKVQSKKEHNANKVKKEVKKPEAKKAAASKPASKPSASKSASQKKTVSKK.

The span at 82-107 (DSKVQSKKEHNANKVKKEVKKPEAKK) shows a compositional bias: basic and acidic residues. A disordered region spans residues 82–132 (DSKVQSKKEHNANKVKKEVKKPEAKKAAASKPASKPSASKSASQKKTVSKK). The segment covering 108–132 (AAASKPASKPSASKSASQKKTVSKK) has biased composition (low complexity).

Belongs to the bacterial ribosomal protein bS16 family.

The protein is Small ribosomal subunit protein bS16 of Malacoplasma penetrans (strain HF-2) (Mycoplasma penetrans).